The following is a 291-amino-acid chain: Pca regulon regulatory protein (291 aa).

The interval 1 to 22 is disordered; sequence MSDETLVNDPVNPEPARPASAA. In terms of domain architecture, HTH iclR-type spans 45-105; sequence MTSLARGLAV…SDGRTYSLLP (61 aa). A DNA-binding region (H-T-H motif) is located at residues 67–86; it reads IAQISHRTEIPRAAVRRCLH. Positions 120–291 constitute an IclR-ED domain; the sequence is LAISAQPYLD…SRDLCHQLFG (172 aa).

Its function is as follows. Positive regulator of all genes within the pca regulon, pcaBDC, pcaIJ and pcaF. Also required for the chemotactic response to aromatic compounds. The protein is Pca regulon regulatory protein (pcaR) of Pseudomonas putida (Arthrobacter siderocapsulatus).